Reading from the N-terminus, the 296-residue chain is Putative S-adenosyl-L-methionine-dependent methyltransferase MAP_3881 (296 aa).

S-adenosyl-L-methionine contacts are provided by residues D121 and 150-151 (DL).

This sequence belongs to the UPF0677 family.

Exhibits S-adenosyl-L-methionine-dependent methyltransferase activity. In Mycolicibacterium paratuberculosis (strain ATCC BAA-968 / K-10) (Mycobacterium paratuberculosis), this protein is Putative S-adenosyl-L-methionine-dependent methyltransferase MAP_3881.